The chain runs to 713 residues: Ribosomal RNA large subunit methyltransferase K/L (713 aa).

The THUMP domain occupies 43 to 154 (LLYRALLWSR…RDQVMLSLDL (112 aa)).

Belongs to the methyltransferase superfamily. RlmKL family.

It is found in the cytoplasm. It carries out the reaction guanosine(2445) in 23S rRNA + S-adenosyl-L-methionine = N(2)-methylguanosine(2445) in 23S rRNA + S-adenosyl-L-homocysteine + H(+). It catalyses the reaction guanosine(2069) in 23S rRNA + S-adenosyl-L-methionine = N(2)-methylguanosine(2069) in 23S rRNA + S-adenosyl-L-homocysteine + H(+). Functionally, specifically methylates the guanine in position 2445 (m2G2445) and the guanine in position 2069 (m7G2069) of 23S rRNA. This Sodalis glossinidius (strain morsitans) protein is Ribosomal RNA large subunit methyltransferase K/L.